A 418-amino-acid polypeptide reads, in one-letter code: tRNA-2-methylthio-N(6)-dimethylallyladenosine synthase (418 aa).

An MTTase N-terminal domain is found at 1 to 118 (MNYLIETIGC…ALKIMNLFRT (118 aa)). 6 residues coordinate [4Fe-4S] cluster: Cys10, Cys46, Cys80, Cys143, Cys147, and Cys150. The Radical SAM core domain maps to 129 to 356 (IKSKIVRYIT…LKESNKISIE (228 aa)). The TRAM domain occupies 359–418 (SEMLGSTQQVLAEEIKNGIIKARTKNGRKVFAEGRKEYIGKHINVNIKEAKINSLFGDIV).

This sequence belongs to the methylthiotransferase family. MiaB subfamily. As to quaternary structure, monomer. The cofactor is [4Fe-4S] cluster.

It localises to the cytoplasm. It carries out the reaction N(6)-dimethylallyladenosine(37) in tRNA + (sulfur carrier)-SH + AH2 + 2 S-adenosyl-L-methionine = 2-methylsulfanyl-N(6)-dimethylallyladenosine(37) in tRNA + (sulfur carrier)-H + 5'-deoxyadenosine + L-methionine + A + S-adenosyl-L-homocysteine + 2 H(+). Catalyzes the methylthiolation of N6-(dimethylallyl)adenosine (i(6)A), leading to the formation of 2-methylthio-N6-(dimethylallyl)adenosine (ms(2)i(6)A) at position 37 in tRNAs that read codons beginning with uridine. This chain is tRNA-2-methylthio-N(6)-dimethylallyladenosine synthase, found in Endomicrobium trichonymphae.